The chain runs to 444 residues: NAD(+)--protein-arginine ADP-ribosyltransferase Tre1 (444 aa).

The PAAR domain stretch occupies residues 72-140; that stretch reads PRHVTGVLAD…NDLLACSAEI (69 aa). The region spanning 266–444 is the TR mART core domain; the sequence is MTLAEAVGQE…TTHLLYREIP (179 aa). The interval 274-444 is ART domain; sequence QEQAKVWTQT…TTHLLYREIP (171 aa). Residues arginine 356, serine 381, and glutamate 415 contribute to the active site.

It belongs to the Arg-specific ADP-ribosyltransferase family. Forms a stable complex with cognate immunity protein Tri1-Sp.

It localises to the secreted. Its subcellular location is the host cytoplasm. The enzyme catalyses L-arginyl-[protein] + NAD(+) = N(omega)-(ADP-D-ribosyl)-L-arginyl-[protein] + nicotinamide + H(+). Functionally, toxic component of a contact-dependent interbacterial competition system (also called effector-immunity systems). Acts by ADP-ribosylating a number of target proteins in target cells; E.coli target proteins include FtsZ, EFTu, RNase E, Fis, RL9, SucB, and LolD. FtsZ is thought to be the physiologically relevant target as it is ADP-ribosylated on a critical residue. ADP-ribosylation of FtsZ prevents formation of the FtsZ mid-cell ring and inhibits cell division. Overexpression of the whole Tre1 protein or the ART domain in E.coli is toxic; cells elongate dramatically and some undergo lysis. Toxic activity is neutralized by coexpression of the cognate immunity protein Tri1-Sp; Tri1-Sp neutralizes this protein both by binding to and occluding the active site (via Tri1's N-terminal extension) and by hydrolysis of the ADP-ribosyl moiety from the target protein. Tre1 can also be neutralized by non-cognate immunity protein Tri1-Pp from P.putida strain GB-1, with which it does not form a stable complex; DraG of R.palustris does not neutralize the toxic effects of this protein. In interbacterial competition studies Tri1 from P.putida strain B6-2 also neutralizes this protein. This Serratia proteamaculans (strain 568) protein is NAD(+)--protein-arginine ADP-ribosyltransferase Tre1.